We begin with the raw amino-acid sequence, 172 residues long: Peptide methionine sulfoxide reductase MsrA (172 aa).

Residue cysteine 14 is part of the active site.

Belongs to the MsrA Met sulfoxide reductase family.

The catalysed reaction is L-methionyl-[protein] + [thioredoxin]-disulfide + H2O = L-methionyl-(S)-S-oxide-[protein] + [thioredoxin]-dithiol. The enzyme catalyses [thioredoxin]-disulfide + L-methionine + H2O = L-methionine (S)-S-oxide + [thioredoxin]-dithiol. In terms of biological role, has an important function as a repair enzyme for proteins that have been inactivated by oxidation. Catalyzes the reversible oxidation-reduction of methionine sulfoxide in proteins to methionine. This chain is Peptide methionine sulfoxide reductase MsrA, found in Streptomyces coelicolor (strain ATCC BAA-471 / A3(2) / M145).